Consider the following 165-residue polypeptide: Protein SprT (165 aa).

The 144-residue stretch at 20 to 163 (EKLAQANLKL…RCVHCGEQLV (144 aa)) folds into the SprT-like domain. Histidine 78 contributes to the Zn(2+) binding site. Glutamate 79 is a catalytic residue. Histidine 82 contributes to the Zn(2+) binding site.

Belongs to the SprT family. The cofactor is Zn(2+).

The protein resides in the cytoplasm. The chain is Protein SprT from Shigella sonnei (strain Ss046).